An 81-amino-acid chain; its full sequence is Photosystem I iron-sulfur center (81 aa).

4Fe-4S ferredoxin-type domains follow at residues 1 to 31 and 39 to 68; these read MSHK…MVPW and IASS…IRVY. Positions 11, 14, 17, 21, 48, 51, 54, and 58 each coordinate [4Fe-4S] cluster.

As to quaternary structure, the cyanobacterial PSI reaction center is composed of one copy each of PsaA,B,C,D,E,F,I,J,K,L,M and X, and forms trimeric complexes. Requires [4Fe-4S] cluster as cofactor.

The protein resides in the cellular thylakoid membrane. The catalysed reaction is reduced [plastocyanin] + hnu + oxidized [2Fe-2S]-[ferredoxin] = oxidized [plastocyanin] + reduced [2Fe-2S]-[ferredoxin]. Apoprotein for the two 4Fe-4S centers FA and FB of photosystem I (PSI); essential for photochemical activity. FB is the terminal electron acceptor of PSI, donating electrons to ferredoxin. The C-terminus interacts with PsaA/B/D and helps assemble the protein into the PSI complex. Required for binding of PsaD and PsaE to PSI. PSI is a plastocyanin/cytochrome c6-ferredoxin oxidoreductase, converting photonic excitation into a charge separation, which transfers an electron from the donor P700 chlorophyll pair to the spectroscopically characterized acceptors A0, A1, FX, FA and FB in turn. The polypeptide is Photosystem I iron-sulfur center (Rippkaea orientalis (strain PCC 8801 / RF-1) (Cyanothece sp. (strain PCC 8801))).